Reading from the N-terminus, the 135-residue chain is UPF0299 membrane protein YPK_2559 (135 aa).

3 helical membrane passes run 30–50 (LLLP…FVLL), 66–86 (LLIR…MQYY), and 93–113 (FGPI…VVAY).

It belongs to the UPF0299 family.

The protein resides in the cell inner membrane. This chain is UPF0299 membrane protein YPK_2559, found in Yersinia pseudotuberculosis serotype O:3 (strain YPIII).